A 266-amino-acid chain; its full sequence is MAAVPELTSEMMAYSSNNENDLFFEADGPGNDVKCCCQDLNHSSLVDEGIQLQVSHQLCNKSLRHFVSVIVALEKLKKPCPQVLQEDDLKSIFCYIFEEEPIICKTDADNFMSDAAMQSVDCKLQDISHKYLVLSNSYELRALHLNGENVNKQVVFHMSFVHGDESNNKIPVVLGIKQKNLYLSCVMKDGKPTLQLEKVDPKVYPKRKMEKRFVFNKIEIKNTVEFESSQYPNWYISTSQVEGMPVFLGNTRGGQDITDFTMEFSS.

Residues 1-114 (MAAVPELTSE…KTDADNFMSD (114 aa)) constitute a propeptide that is removed on maturation.

This sequence belongs to the IL-1 family. Monomer. In its precursor form, weakly interacts with full-length MEFV; the mature cytokine does not interact at all. Interacts with integrins ITGAV:ITGBV and ITGA5:ITGB1; integrin-binding is required for IL1B signaling. Interacts with cargo receptor TMED10; the interaction is direct and is required for the secretion of IL1B mature form. Interacts with HSP90AB1; the interaction facilitates cargo translocation into the ERGIC. Interacts with HSP90B1; the interaction facilitates cargo translocation into the ERGIC.

Its subcellular location is the cytoplasm. It localises to the cytosol. The protein localises to the secreted. It is found in the lysosome. The protein resides in the extracellular exosome. Potent pro-inflammatory cytokine. Initially discovered as the major endogenous pyrogen, induces prostaglandin synthesis, neutrophil influx and activation, T-cell activation and cytokine production, B-cell activation and antibody production, and fibroblast proliferation and collagen production. Promotes Th17 differentiation of T-cells. Synergizes with IL12/interleukin-12 to induce IFNG synthesis from T-helper 1 (Th1) cells. Plays a role in angiogenesis by inducing VEGF production synergistically with TNF and IL6. Involved in transduction of inflammation downstream of pyroptosis: its mature form is specifically released in the extracellular milieu by passing through the gasdermin-D (GSDMD) pore. In Canis lupus familiaris (Dog), this protein is Interleukin-1 beta (IL1B).